The chain runs to 414 residues: tRNA (guanine-N(7)-)-methyltransferase non-catalytic subunit WDR4 (414 aa).

At Ala-2 the chain carries N-acetylalanine. 4 WD repeats span residues 60–99 (QGSDTVLASTFSKSGSYFVLTDDSKRLILFRTNPWQCLSV), 101–140 (TVVRRCTALTFTASEEKILVADKSGDVYSFSVLEPHGGGR), 144–184 (GHLS…IESF), and 187–227 (GHTE…ELHC). The interval 377–414 (EERLQQQLEKKRRQAPPPGPNGPTKKMRAGELAQGCSS) is disordered.

Belongs to the WD repeat TRM82 family. In terms of assembly, non-catalytic component of the METTL1-WDR4 complex, composed of METTL1 and WDR4. Interacts with FEN1; the interaction is direct.

Its subcellular location is the nucleus. It is found in the chromosome. Its pathway is tRNA modification; N(7)-methylguanine-tRNA biosynthesis. In terms of biological role, non-catalytic component of the METTL1-WDR4 methyltransferase complex required for the formation of N(7)-methylguanine in a subset of RNA species, such as tRNAs, mRNAs and microRNAs (miRNAs). In the METTL1-WDR4 methyltransferase complex, WDR4 acts as a scaffold for tRNA-binding. Required for the formation of N(7)-methylguanine at position 46 (m7G46) in a large subset of tRNAs that contain the 5'-RAGGU-3' motif within the variable loop. M7G46 interacts with C13-G22 in the D-loop to stabilize tRNA tertiary structure and protect tRNAs from decay. Also required for the formation of N(7)-methylguanine at internal sites in a subset of mRNAs. Also required for methylation of a specific subset of miRNAs, such as let-7. Independently of METTL1, also plays a role in genome stability: localizes at the DNA replication site and regulates endonucleolytic activities of FEN1. In Bos taurus (Bovine), this protein is tRNA (guanine-N(7)-)-methyltransferase non-catalytic subunit WDR4.